We begin with the raw amino-acid sequence, 48 residues long: Small, acid-soluble spore protein P (48 aa).

A compositionally biased stretch (basic and acidic residues) spans 1–12 (MTNKNDSKDMRK). The disordered stretch occupies residues 1-48 (MTNKNDSKDMRKNVSKGDNPGQPEPLDGSKKVKNRNHTRQKHNTSHDM). A compositionally biased stretch (basic residues) spans 31–48 (KVKNRNHTRQKHNTSHDM).

The protein belongs to the SspP family.

It localises to the spore core. This chain is Small, acid-soluble spore protein P, found in Geobacillus thermodenitrificans (strain NG80-2).